We begin with the raw amino-acid sequence, 327 residues long: MIDAFARDIHYLRVSVTDRCNLRCIYCMPEAGLPLVDHREVLRFEEFERLIAIAASQGIRRVRITGGEPLVRKGIVPFVARVKTMTGIEDVALTTNGLLLPRFASELKAAGLDRVNISLDTLRPERFRAVTRVGRIDDVWTGIEAALAADLHPVKLNVVVMGGVNDDEVADFARLTLQWPIHVRFIELMPIGEGDSRFRGQYVTIEQMKAKMAEQGLRLGDHPGIRGGGPARYHTLAGALGTVGFISAISKHFCGTCNRLRLTAEGKLRPCLHSRQEIDLRTPLRRGASDNLLARIFQKAVEAKPYQHHMLDEGWGDRPRLMSQIGG.

The Radical SAM core domain maps to 4-226; sequence AFARDIHYLR…LRLGDHPGIR (223 aa). Residue Arg13 coordinates GTP. [4Fe-4S] cluster-binding residues include Cys20 and Cys24. An S-adenosyl-L-methionine-binding site is contributed by Tyr26. Position 27 (Cys27) interacts with [4Fe-4S] cluster. GTP is bound at residue Arg63. Gly67 is an S-adenosyl-L-methionine binding site. Thr94 is a binding site for GTP. Residue Ser118 coordinates S-adenosyl-L-methionine. Lys155 is a binding site for GTP. Residue Met189 participates in S-adenosyl-L-methionine binding. [4Fe-4S] cluster is bound by residues Cys254 and Cys257. Position 259–261 (259–261) interacts with GTP; that stretch reads RLR. Cys271 is a [4Fe-4S] cluster binding site.

The protein belongs to the radical SAM superfamily. MoaA family. As to quaternary structure, monomer and homodimer. Requires [4Fe-4S] cluster as cofactor.

It carries out the reaction GTP + AH2 + S-adenosyl-L-methionine = (8S)-3',8-cyclo-7,8-dihydroguanosine 5'-triphosphate + 5'-deoxyadenosine + L-methionine + A + H(+). It participates in cofactor biosynthesis; molybdopterin biosynthesis. Its function is as follows. Catalyzes the cyclization of GTP to (8S)-3',8-cyclo-7,8-dihydroguanosine 5'-triphosphate. The protein is GTP 3',8-cyclase of Heliobacterium modesticaldum (strain ATCC 51547 / Ice1).